We begin with the raw amino-acid sequence, 194 residues long: Holliday junction branch migration complex subunit RuvA (194 aa).

The interval 1–64 (MISRLTGKLV…EDAHLLFGFA (64 aa)) is domain I. Positions 65–143 (TAEERKTFRQ…AHAVTDGLFA (79 aa)) are domain II. The flexible linker stretch occupies residues 144 to 147 (AAPA). The tract at residues 147-194 (AADETEDIVGTLLALGYSEREAKAAVKGVPKGTDVGEGVRLALKNLLK) is domain III.

It belongs to the RuvA family. In terms of assembly, homotetramer. Forms an RuvA(8)-RuvB(12)-Holliday junction (HJ) complex. HJ DNA is sandwiched between 2 RuvA tetramers; dsDNA enters through RuvA and exits via RuvB. An RuvB hexamer assembles on each DNA strand where it exits the tetramer. Each RuvB hexamer is contacted by two RuvA subunits (via domain III) on 2 adjacent RuvB subunits; this complex drives branch migration. In the full resolvosome a probable DNA-RuvA(4)-RuvB(12)-RuvC(2) complex forms which resolves the HJ.

Its subcellular location is the cytoplasm. Functionally, the RuvA-RuvB-RuvC complex processes Holliday junction (HJ) DNA during genetic recombination and DNA repair, while the RuvA-RuvB complex plays an important role in the rescue of blocked DNA replication forks via replication fork reversal (RFR). RuvA specifically binds to HJ cruciform DNA, conferring on it an open structure. The RuvB hexamer acts as an ATP-dependent pump, pulling dsDNA into and through the RuvAB complex. HJ branch migration allows RuvC to scan DNA until it finds its consensus sequence, where it cleaves and resolves the cruciform DNA. The protein is Holliday junction branch migration complex subunit RuvA of Neisseria meningitidis serogroup C / serotype 2a (strain ATCC 700532 / DSM 15464 / FAM18).